We begin with the raw amino-acid sequence, 276 residues long: Undecaprenyl-diphosphatase 2 (276 aa).

A run of 8 helical transmembrane segments spans residues 1-21, 44-64, 87-107, 114-134, 150-170, 190-210, 220-240, and 251-271; these read MSLW…LFPV, QLLP…LWYF, GHLM…GLLL, VFHD…LLWV, MTFK…IPGF, AAEF…VLEL, LMDA…SVRF, and LASF…WFML.

This sequence belongs to the UppP family.

It localises to the cell inner membrane. The catalysed reaction is di-trans,octa-cis-undecaprenyl diphosphate + H2O = di-trans,octa-cis-undecaprenyl phosphate + phosphate + H(+). Functionally, catalyzes the dephosphorylation of undecaprenyl diphosphate (UPP). Confers resistance to bacitracin. The protein is Undecaprenyl-diphosphatase 2 of Burkholderia ambifaria (strain ATCC BAA-244 / DSM 16087 / CCUG 44356 / LMG 19182 / AMMD) (Burkholderia cepacia (strain AMMD)).